The sequence spans 306 residues: Methionyl-tRNA formyltransferase (306 aa).

110–113 serves as a coordination point for (6S)-5,6,7,8-tetrahydrofolate; it reads SLLP.

Belongs to the Fmt family.

The catalysed reaction is L-methionyl-tRNA(fMet) + (6R)-10-formyltetrahydrofolate = N-formyl-L-methionyl-tRNA(fMet) + (6S)-5,6,7,8-tetrahydrofolate + H(+). In terms of biological role, attaches a formyl group to the free amino group of methionyl-tRNA(fMet). The formyl group appears to play a dual role in the initiator identity of N-formylmethionyl-tRNA by promoting its recognition by IF2 and preventing the misappropriation of this tRNA by the elongation apparatus. This is Methionyl-tRNA formyltransferase from Brucella anthropi (strain ATCC 49188 / DSM 6882 / CCUG 24695 / JCM 21032 / LMG 3331 / NBRC 15819 / NCTC 12168 / Alc 37) (Ochrobactrum anthropi).